A 249-amino-acid polypeptide reads, in one-letter code: Homeobox protein TGIF2LX (249 aa).

Disordered regions lie at residues Met-1–Gly-62 and Asp-126–Val-192. Residues Ala-9–Pro-27 are compositionally biased toward basic and acidic residues. The segment covering Ala-28–Asp-46 has biased composition (polar residues). Residues Glu-55 to Asp-118 constitute a DNA-binding region (homeobox; TALE-type). Over residues Asp-159–Gly-172 the composition is skewed to polar residues.

The protein belongs to the TALE/TGIF homeobox family.

The protein resides in the nucleus. May have a transcription role in testis. The polypeptide is Homeobox protein TGIF2LX (TGIF2LX) (Macaca fascicularis (Crab-eating macaque)).